A 90-amino-acid chain; its full sequence is UPF0237 protein BL1209.1 (90 aa).

Residues 5 to 79 (IITVVGQDTV…DDIGVRIRCQ (75 aa)) enclose the ACT domain.

It belongs to the UPF0237 family.

This Bifidobacterium longum (strain NCC 2705) protein is UPF0237 protein BL1209.1.